A 490-amino-acid chain; its full sequence is MTTLPVQQLYIHGQRVDATSGKTFRTVNPATGDVIAEVQVASQADVERAVQSAAEGQKVWAAMTAMERSRILRRAVEILRERNDELAHLETLDTGKALAETTTVDIVTGADVVEYYAGLATAIEGIQLPLRESSFFYTRREPLGVVAGIGAWNYPIQIAMWKSAPALAAGNAMVFKPSEVTPLTAIRLAEIYTEAGVPAGVFNVVQGPGREIGQWLTEHPVIEKISFTGGVATGKKVMASAASSSLKEVTMELGGKSPLVICDDADLDRAADIAVMANFFSSGQVCTNGTRVFVPRSMLAAFEAAVVERVKRIRIGDPMAAETNFGPLTSFPHMENVLRYIESGKAEGARLLTGGGRATEGALANGAYVLPTVFSDCRDDMTIVKEEIFGPVMSILAYDDEDEVVRRANDTTFGLAAGVVSKDVSRAHRIIHRLEAGICWINTWGESPAEMPVGGYKESGVGRENGLSTLGHYTRIKSVQVELGDYASVF.

K(+) contacts are provided by threonine 26 and aspartate 93. 150 to 152 (GAW) provides a ligand contact to NAD(+). Lysine 162 acts as the Charge relay system in catalysis. NAD(+) is bound at residue 176–179 (KPSE). Residue valine 180 coordinates K(+). NAD(+) is bound at residue 230-233 (GVAT). Leucine 246 serves as a coordination point for K(+). The Proton acceptor role is filled by glutamate 252. NAD(+)-binding residues include glycine 254, cysteine 286, and glutamate 387. Cysteine 286 acts as the Nucleophile in catalysis. Position 286 is a cysteine sulfenic acid (-SOH) (cysteine 286). K(+) contacts are provided by lysine 457 and glycine 460. Catalysis depends on glutamate 464, which acts as the Charge relay system.

It belongs to the aldehyde dehydrogenase family. In terms of assembly, dimer of dimers. Requires K(+) as cofactor.

It carries out the reaction betaine aldehyde + NAD(+) + H2O = glycine betaine + NADH + 2 H(+). It participates in amine and polyamine biosynthesis; betaine biosynthesis via choline pathway; betaine from betaine aldehyde: step 1/1. Functionally, involved in the biosynthesis of the osmoprotectant glycine betaine. Catalyzes the irreversible oxidation of betaine aldehyde to the corresponding acid. In Stenotrophomonas maltophilia (strain R551-3), this protein is Betaine aldehyde dehydrogenase.